The sequence spans 360 residues: MKPSFIKKLEALQERHEELQAHLADPLTIQDQERFRMMSREYAQLSNIAELFTEWLKLQNDMIAAKSLLQDPEMHEMATEELEKAKIQSEQLTQQLQILLLPKDIDDSRSCFLEIRAGTGGDEAAIFAGDLFRMYARYAESRSWKMEIISAHEGEHGGYKEMITKISGEGVYGQLKFESGGHRVQRVPTTESQGRIHTSACTVAVMPEIPEEELPKITLSDLRIDTFRSSGAGGQHVNTTDSAIRITHLPTGIVVECQDERSQHKNKAKAMSVLGARMHAAQVQKRQQAQASERRNLLGSGDRSDRHRTYNFPQGRVTDHRINLTLYRLDEVMSGKLDILIHPLLREHQADLLSALSEQE.

At Gln-235 the chain carries N5-methylglutamine. The segment at Lys-285 to Asn-311 is disordered. The segment covering Ser-292 to Arg-308 has biased composition (basic and acidic residues).

It belongs to the prokaryotic/mitochondrial release factor family. Methylated by PrmC. Methylation increases the termination efficiency of RF1.

The protein localises to the cytoplasm. Its function is as follows. Peptide chain release factor 1 directs the termination of translation in response to the peptide chain termination codons UAG and UAA. The polypeptide is Peptide chain release factor 1 (Hamiltonella defensa subsp. Acyrthosiphon pisum (strain 5AT)).